Reading from the N-terminus, the 80-residue chain is Conotoxin MaIr193 (80 aa).

Residues methionine 1–alanine 22 form the signal peptide. Residues aspartate 23–arginine 51 constitute a propeptide that is removed on maturation. Cystine bridges form between cysteine 52-cysteine 69, cysteine 59-cysteine 73, and cysteine 68-cysteine 77. At proline 64 the chain carries 4-hydroxyproline.

It belongs to the conotoxin O1 superfamily. As to expression, expressed by the venom duct.

Its subcellular location is the secreted. The chain is Conotoxin MaIr193 from Conus marmoreus (Marble cone).